A 623-amino-acid polypeptide reads, in one-letter code: V-type proton ATPase catalytic subunit A (623 aa).

Residue 252–259 coordinates ATP; that stretch reads GAFGCGKT.

This sequence belongs to the ATPase alpha/beta chains family. In terms of assembly, V-ATPase is a heteromultimeric enzyme composed of a peripheral catalytic V1 complex (main components: subunits A, B, C, D, E, and F) attached to an integral membrane V0 proton pore complex (main component: the proteolipid protein).

The catalysed reaction is ATP + H2O + 4 H(+)(in) = ADP + phosphate + 5 H(+)(out). Its function is as follows. Catalytic subunit of the peripheral V1 complex of vacuolar ATPase. V-ATPase vacuolar ATPase is responsible for acidifying a variety of intracellular compartments in eukaryotic cells. In Daucus carota (Wild carrot), this protein is V-type proton ATPase catalytic subunit A.